We begin with the raw amino-acid sequence, 733 residues long: Polyribonucleotide nucleotidyltransferase (733 aa).

Mg(2+) contacts are provided by Asp-489 and Asp-495. Residues 556–615 enclose the KH domain; the sequence is PKIDTIKIDVDKIKIVIGKGGETIDKIIAETGVKIDIDEEGNVSIYSSDQDAINRAKEII. The S1 motif domain maps to 625–693; the sequence is DEVYHAKVVR…AKGRVDASMK (69 aa). The tract at residues 691-733 is disordered; sequence SMKVLLPRPPKSDKPKHHHDKGHHPHKEYKGHKDHQESPKTEE. The span at 704-723 shows a compositional bias: basic residues; the sequence is KPKHHHDKGHHPHKEYKGHK. The segment covering 724 to 733 has biased composition (basic and acidic residues); sequence DHQESPKTEE.

It belongs to the polyribonucleotide nucleotidyltransferase family. The cofactor is Mg(2+).

It is found in the cytoplasm. It catalyses the reaction RNA(n+1) + phosphate = RNA(n) + a ribonucleoside 5'-diphosphate. Its function is as follows. Involved in mRNA degradation. Catalyzes the phosphorolysis of single-stranded polyribonucleotides processively in the 3'- to 5'-direction. In Streptococcus sanguinis (strain SK36), this protein is Polyribonucleotide nucleotidyltransferase.